Consider the following 324-residue polypeptide: UDP-N-acetylenolpyruvoylglucosamine reductase (324 aa).

In terms of domain architecture, FAD-binding PCMH-type spans 36–203; the sequence is FRAGGLAELM…TSVLFEGYPE (168 aa). The active site involves R183. S232 acts as the Proton donor in catalysis. The active site involves E302.

The protein belongs to the MurB family. The cofactor is FAD.

It is found in the cytoplasm. The enzyme catalyses UDP-N-acetyl-alpha-D-muramate + NADP(+) = UDP-N-acetyl-3-O-(1-carboxyvinyl)-alpha-D-glucosamine + NADPH + H(+). The protein operates within cell wall biogenesis; peptidoglycan biosynthesis. In terms of biological role, cell wall formation. The chain is UDP-N-acetylenolpyruvoylglucosamine reductase from Rhizobium etli (strain CIAT 652).